Reading from the N-terminus, the 235-residue chain is Phosphoribosylaminoimidazole-succinocarboxamide synthase (235 aa).

This sequence belongs to the SAICAR synthetase family.

The enzyme catalyses 5-amino-1-(5-phospho-D-ribosyl)imidazole-4-carboxylate + L-aspartate + ATP = (2S)-2-[5-amino-1-(5-phospho-beta-D-ribosyl)imidazole-4-carboxamido]succinate + ADP + phosphate + 2 H(+). Its pathway is purine metabolism; IMP biosynthesis via de novo pathway; 5-amino-1-(5-phospho-D-ribosyl)imidazole-4-carboxamide from 5-amino-1-(5-phospho-D-ribosyl)imidazole-4-carboxylate: step 1/2. The protein is Phosphoribosylaminoimidazole-succinocarboxamide synthase of Clostridium botulinum (strain Eklund 17B / Type B).